The primary structure comprises 748 residues: E3 ubiquitin-protein ligase SMURF2 (748 aa).

The C2 domain maps to methionine 1–lysine 119. Residue lysine 119 forms a Glycyl lysine isopeptide (Lys-Gly) (interchain with G-Cter in ubiquitin) linkage. WW domains are found at residues asparagine 157–arginine 190, proline 251–valine 284, and glycine 297–leucine 330. The HECT domain maps to arginine 414–glutamate 748. Residue cysteine 716 is the Glycyl thioester intermediate of the active site.

In terms of assembly, interacts (via WW domains) with SMAD1. Interacts (via WW domains) with SMAD2 (via PY-motif). Interacts (via WW domains) with SMAD3 (via PY-motif). Interacts with SMAD6. Interacts with SMAD7 (via PY-motif) and TGFBR1; SMAD7 recruits SMURF2 to the TGF-beta receptor and regulates its degradation. Does not interact with SMAD4; SMAD4 lacks a PY-motif. Interacts with AIMP1. Interacts with SNON. Interacts with STAMBP and RNF11. May interact with NDFIP1 and NDFIP2; this interaction induces the E3 ubiquitin-protein ligase activity. Interacts with TTC3. (Microbial infection) Interacts (via WW domains) with EBOV and MARV VP40 (via PPXY motif); the interaction facilitates VP40 virus-like particle budding. Post-translationally, auto-ubiquitinated and ubiquitinated in the presence of RNF11 and UBE2D1. Ubiquitinated by the SCF(FBXL15) complex and TTC3, leading to its degradation by the proteasome. 'Lys-48'-linked polyubiquitination mediated by TRAF4 at Lys-119 leads to SMURF2 proteasomal degradation. Widely expressed.

Its subcellular location is the nucleus. The protein resides in the cytoplasm. It is found in the cell membrane. The protein localises to the membrane raft. It carries out the reaction S-ubiquitinyl-[E2 ubiquitin-conjugating enzyme]-L-cysteine + [acceptor protein]-L-lysine = [E2 ubiquitin-conjugating enzyme]-L-cysteine + N(6)-ubiquitinyl-[acceptor protein]-L-lysine.. The protein operates within protein modification; protein ubiquitination. Activated by NDFIP1- and NDFIP2-binding. Its function is as follows. E3 ubiquitin-protein ligase which accepts ubiquitin from an E2 ubiquitin-conjugating enzyme in the form of a thioester and then directly transfers the ubiquitin to targeted substrates. Interacts with SMAD7 to trigger SMAD7-mediated transforming growth factor beta/TGF-beta receptor ubiquitin-dependent degradation, thereby down-regulating TGF-beta signaling. In addition, interaction with SMAD7 activates autocatalytic degradation, which is prevented by interaction with AIMP1. Also forms a stable complex with TGF-beta receptor-mediated phosphorylated SMAD1, SMAD2 and SMAD3, and targets SMAD1 and SMAD2 for ubiquitination and proteasome-mediated degradation. SMAD2 may recruit substrates, such as SNON, for ubiquitin-dependent degradation. Negatively regulates TGFB1-induced epithelial-mesenchymal transition and myofibroblast differentiation. (Microbial infection) In case of filoviruses Ebola/EBOV and Marburg/MARV infection, the complex formed by viral matrix protein VP40 and SMURF2 facilitates virus budding. The sequence is that of E3 ubiquitin-protein ligase SMURF2 from Homo sapiens (Human).